A 132-amino-acid chain; its full sequence is Translation initiation factor 5A (132 aa).

At lysine 36 the chain carries Hypusine.

This sequence belongs to the eIF-5A family.

It is found in the cytoplasm. Functions by promoting the formation of the first peptide bond. The protein is Translation initiation factor 5A (eIF5A) of Thermofilum pendens (strain DSM 2475 / Hrk 5).